The primary structure comprises 161 residues: SsrA-binding protein (161 aa).

This sequence belongs to the SmpB family.

Its subcellular location is the cytoplasm. Functionally, required for rescue of stalled ribosomes mediated by trans-translation. Binds to transfer-messenger RNA (tmRNA), required for stable association of tmRNA with ribosomes. tmRNA and SmpB together mimic tRNA shape, replacing the anticodon stem-loop with SmpB. tmRNA is encoded by the ssrA gene; the 2 termini fold to resemble tRNA(Ala) and it encodes a 'tag peptide', a short internal open reading frame. During trans-translation Ala-aminoacylated tmRNA acts like a tRNA, entering the A-site of stalled ribosomes, displacing the stalled mRNA. The ribosome then switches to translate the ORF on the tmRNA; the nascent peptide is terminated with the 'tag peptide' encoded by the tmRNA and targeted for degradation. The ribosome is freed to recommence translation, which seems to be the essential function of trans-translation. This Baumannia cicadellinicola subsp. Homalodisca coagulata protein is SsrA-binding protein.